The primary structure comprises 558 residues: Phosphatidylserine lipase ABHD16A (558 aa).

A run of 2 helical transmembrane segments spans residues 60-80 (ILAL…FAFF) and 93-113 (VVPF…VACL). Topologically, residues 114 to 558 (RGIGRWTNPQ…AQNFQMPWHL (445 aa)) are cytoplasmic. Residues 281–407 (LVICCEGNAG…LVTRTVRQHL (127 aa)) enclose the AB hydrolase-1 domain. Active-site charge relay system residues include serine 355, aspartate 430, and histidine 507.

This sequence belongs to the AB hydrolase superfamily. ABHD16 family.

It is found in the membrane. The enzyme catalyses 1-heptadecanoyl-2-(5Z,8Z,11Z,14Z-eicosatetraenoyl)-sn-glycero-3-phosphoserine + H2O = 1-heptadecanoyl-sn-glycero-3-phosphoserine + (5Z,8Z,11Z,14Z)-eicosatetraenoate + H(+). It catalyses the reaction 1-hexadecanoyl-2-(9Z-octadecenoyl)-sn-glycero-3-phospho-L-serine + H2O = 1-hexadecanoyl-sn-glycero-3-phospho-L-serine + (9Z)-octadecenoate + H(+). It carries out the reaction 1-octadecanoyl-2-(9Z,12Z-octadecadienoyl)-sn-glycero-3-phosphoserine + H2O = 1-octadecanoyl-sn-glycero-3-phosphoserine + (9Z,12Z)-octadecadienoate + H(+). The catalysed reaction is 1-heptadecanoyl-2-(5Z,8Z,11Z,14Z-eicosatetraenoyl)-sn-glycero-3-phosphocholine + H2O = 1-heptadecanoyl-sn-glycero-3-phosphocholine + (5Z,8Z,11Z,14Z)-eicosatetraenoate + H(+). The enzyme catalyses 1-hexadecanoyl-2-(9Z-octadecenoyl)-sn-glycero-3-phosphoglycerol + H2O = 1-hexadecanoyl-sn-glycero-3-phosphoglycerol + (9Z)-octadecenoate + H(+). It catalyses the reaction 1-hexadecanoyl-2-(9Z-octadecenoyl)-sn-glycero-3-phospho-(1D-myo-inositol) + H2O = 1-hexadecanoyl-sn-glycero-3-phospho-(1D-myo-inositol) + (9Z)-octadecenoate + H(+). It carries out the reaction 1-heptadecanoyl-2-(5Z,8Z,11Z,14Z-eicosatetraenoyl)-sn-glycero-3-phosphoethanolamine + H2O = 1-heptadecanoyl-sn-glycero-3-phosphoethanolamine + (5Z,8Z,11Z,14Z)-eicosatetraenoate + H(+). The catalysed reaction is 1-hexadecanoyl-2-(9Z-octadecenoyl)-sn-glycero-3-phospho-(1'-sn-glycerol) + H2O = 1-hexadecanoyl-sn-glycero-3-phospho-(1'-sn-glycerol) + (9Z)-octadecenoate + H(+). The enzyme catalyses Hydrolyzes glycerol monoesters of long-chain fatty acids.. It catalyses the reaction 1-tetradecanoylglycerol + H2O = tetradecanoate + glycerol + H(+). It carries out the reaction 2-hexadecanoylglycerol + H2O = glycerol + hexadecanoate + H(+). The catalysed reaction is 1-(9Z-octadecenoyl)-glycerol + H2O = glycerol + (9Z)-octadecenoate + H(+). The enzyme catalyses 2-(9Z-octadecenoyl)-glycerol + H2O = glycerol + (9Z)-octadecenoate + H(+). It catalyses the reaction 2-(9Z,12Z-octadecadienoyl)-glycerol + H2O = (9Z,12Z)-octadecadienoate + glycerol + H(+). It carries out the reaction 1-(5Z,8Z,11Z,14Z-eicosatetraenoyl)-glycerol + H2O = glycerol + (5Z,8Z,11Z,14Z)-eicosatetraenoate + H(+). The catalysed reaction is 2-(5Z,8Z,11Z,14Z-eicosatetraenoyl)-glycerol + H2O = glycerol + (5Z,8Z,11Z,14Z)-eicosatetraenoate + H(+). The enzyme catalyses prostaglandin D2-1-glycerol ester + H2O = prostaglandin D2 + glycerol + H(+). It catalyses the reaction 2-glyceryl-15-deoxy-Delta(12,14)-prostaglandin J2 + H2O = 15-deoxy-Delta(12,14)-prostaglandin J2 + glycerol + H(+). It carries out the reaction 1-(9Z,12Z-octadecadienoyl)-glycerol + H2O = (9Z,12Z)-octadecadienoate + glycerol + H(+). Phosphatidylserine (PS) lipase that mediates the hydrolysis of phosphatidylserine to generate lysophosphatidylserine (LPS). LPS constitutes a class of signaling lipids that regulates immunological and neurological processes. Has no activity towards diacylglycerol, triacylglycerol or lysophosphatidylserine lipase. Also has monoacylglycerol lipase activity, with preference for 1-(9Z,12Z-octadecadienoyl)-glycerol (1-LG) and 2-glyceryl-15-deoxy-Delta(12,14)-prostaglandin J2 (15d-PGJ(2)-G). The chain is Phosphatidylserine lipase ABHD16A from Pongo abelii (Sumatran orangutan).